The chain runs to 250 residues: Pyrroloquinoline-quinone synthase (250 aa).

This sequence belongs to the PqqC family.

It catalyses the reaction 6-(2-amino-2-carboxyethyl)-7,8-dioxo-1,2,3,4,7,8-hexahydroquinoline-2,4-dicarboxylate + 3 O2 = pyrroloquinoline quinone + 2 H2O2 + 2 H2O + H(+). The protein operates within cofactor biosynthesis; pyrroloquinoline quinone biosynthesis. Its function is as follows. Ring cyclization and eight-electron oxidation of 3a-(2-amino-2-carboxyethyl)-4,5-dioxo-4,5,6,7,8,9-hexahydroquinoline-7,9-dicarboxylic-acid to PQQ. In Xanthomonas axonopodis pv. citri (strain 306), this protein is Pyrroloquinoline-quinone synthase.